Reading from the N-terminus, the 380-residue chain is MKYADEFRDKEIALGLAKAIRAEADPRKPYRFMEFCGGHTHAISRYGLEDMLPKNVRMIHGPGCPVCVLPAGRIDMAIRLAERPDIILCVYGDLMRVPGSQGASLLKAKARGADIRMVYSTIDAIRIAEDNPGREVVFFAIGFETTTPPTAVMIRLAGKKQLENFSVFCNHVLTPPAMQNILESPDIRNIGRVEIDGFVGPAHVSTIIGTAPYEFFAEEFGKPVVIAGFEPLDMMQAILMLVRQVNEHRHEVENQYSRAVSRDGNLRAKEEVSDIFELRDQFEWRGLGQVPYSGLKLKRAYAKYDAEVRFDMNELRVDDNPACECGAILRGVKKPVDCKLFGTVCTPETPMGSCMVSSEGACAAHWTYGRFRDHQQRRAS.

Cys36, Cys64, and Cys67 together coordinate Fe cation.

Belongs to the HypD family. The cofactor is [4Fe-4S] cluster.

It functions in the pathway protein modification; [NiFe] hydrogenase maturation. In terms of biological role, involved in the maturation of [NiFe] hydrogenases. Involved in the biosynthesis of the Fe(CN)(2)CO cofactor. The chain is Hydrogenase maturation factor HypD2 (hypD2) from Bradyrhizobium diazoefficiens (strain JCM 10833 / BCRC 13528 / IAM 13628 / NBRC 14792 / USDA 110).